A 141-amino-acid polypeptide reads, in one-letter code: ATP synthase epsilon chain (141 aa).

Belongs to the ATPase epsilon chain family. F-type ATPases have 2 components, CF(1) - the catalytic core - and CF(0) - the membrane proton channel. CF(1) has five subunits: alpha(3), beta(3), gamma(1), delta(1), epsilon(1). CF(0) has three main subunits: a, b and c.

It is found in the cell inner membrane. Functionally, produces ATP from ADP in the presence of a proton gradient across the membrane. This chain is ATP synthase epsilon chain, found in Thioalkalivibrio sulfidiphilus (strain HL-EbGR7).